The sequence spans 548 residues: BTB/POZ domain-containing protein At5g17580 (548 aa).

The BTB domain maps to 7–74 (SDLHINVKGV…CNGSEFKFTS (68 aa)). The region spanning 180–442 (DWKSEDLITI…VNVLCVSQLQ (263 aa)) is the NPH3 domain. The residue at position 383 (Tyr383) is a Phosphotyrosine. Positions 442–493 (QIRDTVAKEIKGMEEKVDEEEEEEIEVSSDEDEMEKMSNKLLGLEIENDECV) form a coiled coil.

Belongs to the NPH3 family.

It participates in protein modification; protein ubiquitination. In terms of biological role, may act as a substrate-specific adapter of an E3 ubiquitin-protein ligase complex (CUL3-RBX1-BTB) which mediates the ubiquitination and subsequent proteasomal degradation of target proteins. The sequence is that of BTB/POZ domain-containing protein At5g17580 from Arabidopsis thaliana (Mouse-ear cress).